A 118-amino-acid polypeptide reads, in one-letter code: Large ribosomal subunit protein uL24 (118 aa).

Belongs to the universal ribosomal protein uL24 family. Part of the 50S ribosomal subunit.

Functionally, one of two assembly initiator proteins, it binds directly to the 5'-end of the 23S rRNA, where it nucleates assembly of the 50S subunit. One of the proteins that surrounds the polypeptide exit tunnel on the outside of the subunit. This is Large ribosomal subunit protein uL24 from Prochlorococcus marinus (strain NATL2A).